The chain runs to 282 residues: Bifunctional protein FolD (282 aa).

Residues 165–167 (GAS) and Ile-231 each bind NADP(+).

The protein belongs to the tetrahydrofolate dehydrogenase/cyclohydrolase family. As to quaternary structure, homodimer.

It catalyses the reaction (6R)-5,10-methylene-5,6,7,8-tetrahydrofolate + NADP(+) = (6R)-5,10-methenyltetrahydrofolate + NADPH. The catalysed reaction is (6R)-5,10-methenyltetrahydrofolate + H2O = (6R)-10-formyltetrahydrofolate + H(+). The protein operates within one-carbon metabolism; tetrahydrofolate interconversion. Functionally, catalyzes the oxidation of 5,10-methylenetetrahydrofolate to 5,10-methenyltetrahydrofolate and then the hydrolysis of 5,10-methenyltetrahydrofolate to 10-formyltetrahydrofolate. This Francisella tularensis subsp. novicida (strain U112) protein is Bifunctional protein FolD.